The following is a 62-amino-acid chain: Temporin-CDYb (62 aa).

Positions 1-22 (MFTLKKSLLLLFFLGTINLSLC) are cleaved as a signal peptide. The propeptide occupies 23-45 (EEERDADEEERRDDPEERAVQVE). Leu-60 bears the Leucine amide mark.

This sequence belongs to the frog skin active peptide (FSAP) family. Temporin subfamily. As to expression, expressed by the skin glands.

It is found in the secreted. Its function is as follows. Antimicrobial peptide. Has low activity against the Gram-positive bacterium S.aureus (MIC&gt;100 uM) and the Gram-negative bacterium E.coli (MIC&gt;100 uM). Has weak hemolytic activity against human erythrocytes. This Rana dybowskii (Dybovsky's frog) protein is Temporin-CDYb.